We begin with the raw amino-acid sequence, 147 residues long: MALKRINKELSDLARDPPAQCSAGPVGDDMFHWQATIMGPNDSPYQGGVFFLTIHFPTDYPFKPPKVAFTTRIYHPNINSNGSICLDILRSQWSPALTISKVLLSICSLLCDPNPDDPLVPEIARIYKTDRDKYNRISREWTQKYAM.

In terms of domain architecture, UBC core spans 1-147 (MALKRINKEL…SREWTQKYAM (147 aa)). A disulfide bridge connects residues cysteine 21 and cysteine 107. The active-site Glycyl thioester intermediate is the cysteine 85.

This sequence belongs to the ubiquitin-conjugating enzyme family. As to quaternary structure, interacts with SCF (SKP1-CUL1-F-box protein) E3 ubiquitin ligase complex; when Cullin is neddylated, the interaction between the E2 and the SCF complex is strengthened. Interacts with DAPK3. Interacts with BRCA1; the DNA damage checkpoint promotes the association with BRCA1 after ionizing radiation. Interacts non-covalently with ubiquitin. Interacts with E3 ubiquitin-protein ligase CBLC. Interacts with UBTD1. Interacts with RIGI and RNF135; involved in RIGI ubiquitination and activation. In terms of processing, phosphorylated by AURKB.

It localises to the cell membrane. The protein resides in the endosome membrane. It carries out the reaction S-ubiquitinyl-[E1 ubiquitin-activating enzyme]-L-cysteine + [E2 ubiquitin-conjugating enzyme]-L-cysteine = [E1 ubiquitin-activating enzyme]-L-cysteine + S-ubiquitinyl-[E2 ubiquitin-conjugating enzyme]-L-cysteine.. The catalysed reaction is S-ubiquitinyl-[E1 ubiquitin-activating enzyme]-L-cysteine + [acceptor protein]-L-lysine = [E1 ubiquitin-activating enzyme]-L-cysteine + N(6)-monoubiquitinyl-[acceptor protein]-L-lysine.. The protein operates within protein modification; protein ubiquitination. Its function is as follows. Accepts ubiquitin from the E1 complex and catalyzes its covalent attachment to other proteins. In vitro catalyzes 'Lys-11'-, as well as 'Lys-48'-linked polyubiquitination. Cooperates with the E2 CDC34 and the SCF(FBXW11) E3 ligase complex for the polyubiquitination of NFKBIA leading to its subsequent proteasomal degradation. Acts as an initiator E2, priming the phosphorylated NFKBIA target at positions 'Lys-21' and/or 'Lys-22' with a monoubiquitin. Ubiquitin chain elongation is then performed by CDC34, building ubiquitin chains from the UBE2D3-primed NFKBIA-linked ubiquitin. Also acts as an initiator E2, in conjunction with RNF8, for the priming of PCNA. Monoubiquitination of PCNA, and its subsequent polyubiquitination, are essential events in the operation of the DNA damage tolerance (DDT) pathway that is activated after DNA damage caused by UV or chemical agents during S-phase. Associates with the BRCA1/BARD1 E3 ligase complex to perform ubiquitination at DNA damage sites following ionizing radiation leading to DNA repair. Targets DAPK3 for ubiquitination which influences promyelocytic leukemia protein nuclear body (PML-NB) formation in the nucleus. In conjunction with the MDM2 and TOPORS E3 ligases, functions ubiquitination of p53/TP53. In conjunction with the CBL E3 ligase, targets EGFR for polyubiquitination at the plasma membrane as well as during its internalization and transport on endosomes. In conjunction with the STUB1 E3 quality control E3 ligase, ubiquitinates unfolded proteins to catalyze their immediate destruction. Together with RNF135, catalyzes the viral RNA-dependent 'Lys-63'-linked polyubiquitination of RIGI to activate the downstream signaling pathway that leads to interferon beta production. Together with ZNF598, catalyzes ubiquitination of 40S ribosomal proteins in response to ribosome collisions. In cooperation with the GATOR2 complex, catalyzes 'Lys-6'-linked ubiquitination of NPRL2. In Homo sapiens (Human), this protein is Ubiquitin-conjugating enzyme E2 D3 (UBE2D3).